Reading from the N-terminus, the 572-residue chain is Alpha-1D adrenergic receptor (572 aa).

The interval 1–77 (MTFRDLLSVS…SAGEPGSAGA (77 aa)) is disordered. Residues 1–95 (MTFRDLLSVS…AVGGLVVSAQ (95 aa)) are Extracellular-facing. 2 stretches are compositionally biased toward gly residues: residues 23 to 33 (SSAGGGGGSAG) and 42 to 61 (AVGG…GAGS). N65 and N82 each carry an N-linked (GlcNAc...) asparagine glycan. The chain crosses the membrane as a helical span at residues 96 to 121 (GVGVGVFLAAFILMAVAGNLLVILSV). At 122–133 (ACNRHLQTVTNY) the chain is on the cytoplasmic side. A helical membrane pass occupies residues 134–159 (FIVNLAVADLLLSATVLPFSATMEVL). The Extracellular portion of the chain corresponds to 160–169 (GFWAFGRAFC). A helical membrane pass occupies residues 170–192 (DVWAAVDVLCCTASILSLCTISV). Residues 193-213 (DRYVGVRHSLKYPAIMTERKA) lie on the Cytoplasmic side of the membrane. The helical transmembrane segment at 214 to 238 (AAILALLWVVALVVSVGPLLGWKEP) threads the bilayer. Residues 239–251 (VPPDERFCGITEE) are Extracellular-facing. A helical membrane pass occupies residues 252–275 (AGYAVFSSVCSFYLPMAVIVVMYC). Residues 276 to 348 (RVYVVARSTT…KFSREKKAAK (73 aa)) lie on the Cytoplasmic side of the membrane. A helical transmembrane segment spans residues 349 to 373 (TLAIVVGVFVLCWFPFFFVLPLGSL). Over 374–380 (FPQLKPS) the chain is Extracellular. The helical transmembrane segment at 381–405 (EGVFKVIFWLGYFNSCVNPLIYPCS) threads the bilayer. The Cytoplasmic portion of the chain corresponds to 406–572 (SREFKRAFLR…DYSNLRETDI (167 aa)). C419 carries the S-palmitoyl cysteine lipid modification. Residues 444–488 (GLRQDCAPSSGDAPPGAPLALTALPDPDPEPPGTPEMQAPVASRR) are disordered. Residues 450 to 468 (APSSGDAPPGAPLALTALP) show a composition bias toward low complexity.

Belongs to the G-protein coupled receptor 1 family. Adrenergic receptor subfamily. ADRA1D sub-subfamily. Interacts with FLNA (via filamin repeat 21); increases PKA-mediated phosphorylation of FLNA. In terms of processing, palmitoylated. Palmitoylation by ZDHHC21 may increase the expression of the receptor and regulate downstream signaling.

Its subcellular location is the cell membrane. In terms of biological role, this alpha-adrenergic receptor mediates its effect through the influx of extracellular calcium. In Homo sapiens (Human), this protein is Alpha-1D adrenergic receptor (ADRA1D).